Consider the following 149-residue polypeptide: Protein SprT-like (149 aa).

Positions 6–147 (LQKLTEDISL…CGKCRGKIKR (142 aa)) constitute a SprT-like domain. His67 contacts Zn(2+). The active site involves Glu68. His71 is a binding site for Zn(2+).

The protein belongs to the SprT family. It depends on Zn(2+) as a cofactor.

It is found in the cytoplasm. This Bacillus velezensis (strain DSM 23117 / BGSC 10A6 / LMG 26770 / FZB42) (Bacillus amyloliquefaciens subsp. plantarum) protein is Protein SprT-like.